The chain runs to 99 residues: uncharacterized protein (99 aa).

Positions 1 to 17 (MMMNAFFPAMALIVLVG) are cleaved as a signal peptide. Cys18 carries the N-palmitoyl cysteine lipid modification. A lipid anchor (S-diacylglycerol cysteine) is attached at Cys18.

The protein localises to the cell membrane. This is an uncharacterized protein from Escherichia coli (strain UTI89 / UPEC).